The primary structure comprises 447 residues: N-succinylarginine dihydrolase (447 aa).

Residues 19–28 (AGLSFGNEAS), N110, and 137–138 (HR) each bind substrate. The active site involves E174. Position 212 (R212) interacts with substrate. H248 is an active-site residue. Residues D250 and N359 each contribute to the substrate site. Residue C365 is the Nucleophile of the active site.

The protein belongs to the succinylarginine dihydrolase family. As to quaternary structure, homodimer.

The enzyme catalyses N(2)-succinyl-L-arginine + 2 H2O + 2 H(+) = N(2)-succinyl-L-ornithine + 2 NH4(+) + CO2. It participates in amino-acid degradation; L-arginine degradation via AST pathway; L-glutamate and succinate from L-arginine: step 2/5. Functionally, catalyzes the hydrolysis of N(2)-succinylarginine into N(2)-succinylornithine, ammonia and CO(2). The chain is N-succinylarginine dihydrolase from Escherichia coli O6:H1 (strain CFT073 / ATCC 700928 / UPEC).